A 149-amino-acid polypeptide reads, in one-letter code: Transcriptional repressor NrdR (149 aa).

A zinc finger spans residues 3–34; it reads CPFCSATDTKVIDSRLVADGHQVRRRRECTLC. Residues 49–139 form the ATP-cone domain; it reads PRVIKRDDTR…VYRAFEDVSQ (91 aa).

It belongs to the NrdR family. Requires Zn(2+) as cofactor.

Negatively regulates transcription of bacterial ribonucleotide reductase nrd genes and operons by binding to NrdR-boxes. The chain is Transcriptional repressor NrdR from Shewanella denitrificans (strain OS217 / ATCC BAA-1090 / DSM 15013).